The primary structure comprises 369 residues: MLTKGVRALAWSPRRYITLDAEAAKPVVAKRRRMTEFTDKLNKGPSFEDFLTGKAAQMTLDPLEEARQNAEESKKLPAWLKVPIPKGKNFHKLKEDVRDLKLSTVCEEAKCPNIGECWGGNKGSATATIMLLGDTCTRGCRFCSVKTNRTPAKPDPKEPENTAEAISRWGLGYVVLTMVDRDDLPDGGAHHLAETVQRIKQKAPHILVETLAGDFRGNLEMVDVMARSGLDVYAHNVETVEALTPHVRDRRATYQQSLSVLKRAKQTVPTLVTKTSIMLGMGETDEQVLQTMKDLRAVDCDVVTFGQYMRPTRRHMKVVEYVKPEKFDYWKEKALELGFLYCASGPLVRSSYKAGEAYIENVLRNRRQA.

The transit peptide at 1 to 32 (MLTKGVRALAWSPRRYITLDAEAAKPVVAKRR) directs the protein to the mitochondrion. Residues Cys106, Cys111, Cys117, Cys136, Cys140, Cys143, and Ser351 each coordinate [4Fe-4S] cluster. A Radical SAM core domain is found at 121–340 (NKGSATATIM…KEKALELGFL (220 aa)).

It belongs to the radical SAM superfamily. Lipoyl synthase family. [4Fe-4S] cluster serves as cofactor.

The protein localises to the mitochondrion. The catalysed reaction is [[Fe-S] cluster scaffold protein carrying a second [4Fe-4S](2+) cluster] + N(6)-octanoyl-L-lysyl-[protein] + 2 oxidized [2Fe-2S]-[ferredoxin] + 2 S-adenosyl-L-methionine + 4 H(+) = [[Fe-S] cluster scaffold protein] + N(6)-[(R)-dihydrolipoyl]-L-lysyl-[protein] + 4 Fe(3+) + 2 hydrogen sulfide + 2 5'-deoxyadenosine + 2 L-methionine + 2 reduced [2Fe-2S]-[ferredoxin]. It functions in the pathway protein modification; protein lipoylation via endogenous pathway; protein N(6)-(lipoyl)lysine from octanoyl-[acyl-carrier-protein]: step 2/2. Catalyzes the radical-mediated insertion of two sulfur atoms into the C-6 and C-8 positions of the octanoyl moiety bound to the lipoyl domains of lipoate-dependent enzymes, thereby converting the octanoylated domains into lipoylated derivatives. In Eremothecium gossypii (strain ATCC 10895 / CBS 109.51 / FGSC 9923 / NRRL Y-1056) (Yeast), this protein is Lipoyl synthase, mitochondrial.